A 199-amino-acid polypeptide reads, in one-letter code: Putative rhomboid protease YdcA (199 aa).

6 helical membrane-spanning segments follow: residues 14 to 34, 65 to 85, 97 to 117, 122 to 142, 147 to 167, and 172 to 192; these read LYPV…FFSL, ILLH…FLFA, FLLV…VTEP, HVGA…MVLF, IGQE…LMSF, and INMM…FLCV. Catalysis depends on serine 126, which acts as the Nucleophile. Residue histidine 177 is the Charge relay system of the active site.

The protein belongs to the peptidase S54 family.

The protein resides in the cell membrane. This chain is Putative rhomboid protease YdcA (ydcA), found in Bacillus subtilis (strain 168).